Here is a 696-residue protein sequence, read N- to C-terminus: Polyribonucleotide nucleotidyltransferase (696 aa).

Mg(2+) is bound by residues aspartate 486 and aspartate 492. The KH domain occupies 553–612; sequence PRIIVRNIPKDRIGELIGPGGKNVRGISELTGAELYIEDDGRVTISGSNQESAEKAAKMV. The S1 motif domain maps to 622-690; sequence GKIYEGKVKR…KTGKIDLSRK (69 aa).

This sequence belongs to the polyribonucleotide nucleotidyltransferase family. The cofactor is Mg(2+).

It is found in the cytoplasm. The enzyme catalyses RNA(n+1) + phosphate = RNA(n) + a ribonucleoside 5'-diphosphate. Its function is as follows. Involved in mRNA degradation. Catalyzes the phosphorolysis of single-stranded polyribonucleotides processively in the 3'- to 5'-direction. The protein is Polyribonucleotide nucleotidyltransferase of Leptospira borgpetersenii serovar Hardjo-bovis (strain L550).